Reading from the N-terminus, the 458-residue chain is SH2 domain-containing protein 7 (458 aa).

The SH2 domain maps to 51 to 142 (WFHGFITRKQ…PFGETLAAAC (92 aa)). 2 disordered regions span residues 204–235 (RSVS…SPAG) and 267–326 (AGSL…TLGS). The segment covering 278–288 (PSGKLSDEDQN) has biased composition (basic and acidic residues). A compositionally biased stretch (polar residues) spans 304–326 (QGSTMPYTSLGFSLPPSSETLGS).

This Mus musculus (Mouse) protein is SH2 domain-containing protein 7 (Sh2d7).